The sequence spans 210 residues: FMN-dependent NADH:quinone oxidoreductase (210 aa).

FMN-binding positions include S10 and 16–18 (SRS).

This sequence belongs to the azoreductase type 1 family. As to quaternary structure, homodimer. The cofactor is FMN.

It catalyses the reaction 2 a quinone + NADH + H(+) = 2 a 1,4-benzosemiquinone + NAD(+). It carries out the reaction N,N-dimethyl-1,4-phenylenediamine + anthranilate + 2 NAD(+) = 2-(4-dimethylaminophenyl)diazenylbenzoate + 2 NADH + 2 H(+). Quinone reductase that provides resistance to thiol-specific stress caused by electrophilic quinones. Its function is as follows. Also exhibits azoreductase activity. Catalyzes the reductive cleavage of the azo bond in aromatic azo compounds to the corresponding amines. The chain is FMN-dependent NADH:quinone oxidoreductase from Kineococcus radiotolerans (strain ATCC BAA-149 / DSM 14245 / SRS30216).